Consider the following 172-residue polypeptide: Large ribosomal subunit protein uL10 (172 aa).

It belongs to the universal ribosomal protein uL10 family. In terms of assembly, part of the ribosomal stalk of the 50S ribosomal subunit. The N-terminus interacts with L11 and the large rRNA to form the base of the stalk. The C-terminus forms an elongated spine to which 3 L12 dimers bind in a sequential fashion forming a heptameric L10(L12)2(L12)2(L12)2 complex.

Functionally, forms part of the ribosomal stalk, playing a central role in the interaction of the ribosome with GTP-bound translation factors. In Agrobacterium fabrum (strain C58 / ATCC 33970) (Agrobacterium tumefaciens (strain C58)), this protein is Large ribosomal subunit protein uL10.